A 445-amino-acid polypeptide reads, in one-letter code: MDRSQYLTVSELTKYLKMKFDRDPYLHTVYLTGELSNFRLRQKHQYFSLKDDNAVIDAVMFEHQFRKIKFTPEQGMKVCVVGHVSLYEKSGRYQIYIDRMEPDGLGSLYLAFEQLKKKLSAEGLFNLPKKQIPMFPKRIAVVTSIDGAVIRDINTTVRRRYPIAQVVLYPTVVQGDKAAADIARQINRANDRGDFDTLIIGRGGGSMEDLWPFNEEVVARAIANSKIPVISSVGHETDTTIADLVADQRAATPTAAAELATPVKLNDALMTLKDDQNRLLNTMRTKINFDRQQLNKQLQSYIFQQPTRLYENYAQKVDQLTQQLGQAAQNKMQELQMNVERLSGRLTAASPLHRVQQQEQLVDQLKKQLVTASLASQNEKKQQVTTLIKQLDSLSPLKIMSRGYTYVTSDEKVVNHASQLTVGQNVHLHFDDGEVQAEIKKVKEH.

Belongs to the XseA family. As to quaternary structure, heterooligomer composed of large and small subunits.

It is found in the cytoplasm. The catalysed reaction is Exonucleolytic cleavage in either 5'- to 3'- or 3'- to 5'-direction to yield nucleoside 5'-phosphates.. In terms of biological role, bidirectionally degrades single-stranded DNA into large acid-insoluble oligonucleotides, which are then degraded further into small acid-soluble oligonucleotides. This Limosilactobacillus reuteri (strain DSM 20016) (Lactobacillus reuteri) protein is Exodeoxyribonuclease 7 large subunit.